A 1004-amino-acid chain; its full sequence is Kinesin-like protein KIN-7I (1004 aa).

In terms of domain architecture, Kinesin motor spans 6-326 (KILVSVRVRP…LLFATCAKEV (321 aa)). 89-96 (GQTSSGKT) is an ATP binding site. Coiled coils occupy residues 335–402 (VVSE…AQSR), 517–576 (KKEY…QKQS), and 634–661 (SVEK…DQSE). Disordered regions lie at residues 567-599 (EQSV…KSLP), 628-671 (SQQT…PEDE), and 802-830 (TMQH…GEKT). 2 stretches are compositionally biased toward basic and acidic residues: residues 569 to 582 (SVEK…KEEM) and 634 to 652 (SVEK…EDLK). Over residues 653–663 (QNLSMDQSEQL) the composition is skewed to polar residues. Lysine 881 is covalently cross-linked (Glycyl lysine isopeptide (Lys-Gly) (interchain with G-Cter in ubiquitin)).

The protein belongs to the TRAFAC class myosin-kinesin ATPase superfamily. Kinesin family. KIN-7 subfamily.

This chain is Kinesin-like protein KIN-7I, found in Arabidopsis thaliana (Mouse-ear cress).